The sequence spans 325 residues: MIKSIPRIMLAPMQGVLDPFMRKLLTAYNDYDLCVSEFVRVVDQRLPKKTFYRLAPELLQGGLTDSGTPIRVQLLGQYPQWLAENAQLAIELGSYGIDFNCGCPSKTVNGSHGGAALLKDPELIYCATKAIREAVPKAQPVSVKMRLGWDCASQCFEIADAIQQAGADEITVHGRTKQDGYRAERINWQAIGQIQQRLNIPVIANGEILDFNSAQKCREITACCGLMIGRGALNTPNLSKVIKYNVAKMAWSEVLQLLYEYVNMPNERDSGFYHVARIKQWLHYLDKAYPEAVDLFQIVKTEHSYDGVKAHIEKAVGRNEKTNFQ.

Residues P12–Q14 and Q73 contribute to the FMN site. C103 (proton donor) is an active-site residue. Residues K144, N205 to E207, and G229 to R230 each bind FMN.

Belongs to the Dus family. DusC subfamily. FMN serves as cofactor.

It catalyses the reaction 5,6-dihydrouridine(16) in tRNA + NADP(+) = uridine(16) in tRNA + NADPH + H(+). The enzyme catalyses 5,6-dihydrouridine(16) in tRNA + NAD(+) = uridine(16) in tRNA + NADH + H(+). In terms of biological role, catalyzes the synthesis of 5,6-dihydrouridine (D), a modified base found in the D-loop of most tRNAs, via the reduction of the C5-C6 double bond in target uridines. Specifically modifies U16 in tRNAs. This chain is tRNA-dihydrouridine(16) synthase, found in Haemophilus ducreyi (strain 35000HP / ATCC 700724).